We begin with the raw amino-acid sequence, 53 residues long: Mannose/glucose-specific lectin alpha 2 chain (53 aa).

The protein belongs to the leguminous lectin family. Tetramer of two alpha and two beta chains.

The sequence is that of Mannose/glucose-specific lectin alpha 2 chain from Lathyrus ochrus (Cyprus-vetch).